A 431-amino-acid chain; its full sequence is Glutamate-1-semialdehyde 2,1-aminomutase (431 aa).

Position 269 is an N6-(pyridoxal phosphate)lysine (Lys-269).

The protein belongs to the class-III pyridoxal-phosphate-dependent aminotransferase family. HemL subfamily. Homodimer. Pyridoxal 5'-phosphate serves as cofactor.

The protein localises to the cytoplasm. It catalyses the reaction (S)-4-amino-5-oxopentanoate = 5-aminolevulinate. Its pathway is porphyrin-containing compound metabolism; protoporphyrin-IX biosynthesis; 5-aminolevulinate from L-glutamyl-tRNA(Glu): step 2/2. This is Glutamate-1-semialdehyde 2,1-aminomutase from Francisella tularensis subsp. mediasiatica (strain FSC147).